The primary structure comprises 184 residues: Ribosome maturation factor RimM (184 aa).

Residues 101–174 form the PRC barrel domain; sequence PDEYYDHQLV…RVVIADRPGL (74 aa).

It belongs to the RimM family. As to quaternary structure, binds ribosomal protein uS19.

It localises to the cytoplasm. An accessory protein needed during the final step in the assembly of 30S ribosomal subunit, possibly for assembly of the head region. Essential for efficient processing of 16S rRNA. May be needed both before and after RbfA during the maturation of 16S rRNA. It has affinity for free ribosomal 30S subunits but not for 70S ribosomes. The polypeptide is Ribosome maturation factor RimM (Nocardioides sp. (strain ATCC BAA-499 / JS614)).